A 261-amino-acid chain; its full sequence is Glucose 1-dehydrogenase 2 (261 aa).

11-35 contacts NADP(+); sequence VVTGGSKGLGRAMAVRFGQEQSKVV. Residue Ser-145 participates in substrate binding. Tyr-158 serves as the catalytic Proton acceptor.

This sequence belongs to the short-chain dehydrogenases/reductases (SDR) family. In terms of assembly, homotetramer.

It carries out the reaction D-glucose + NAD(+) = D-glucono-1,5-lactone + NADH + H(+). It catalyses the reaction D-glucose + NADP(+) = D-glucono-1,5-lactone + NADPH + H(+). In Priestia megaterium (Bacillus megaterium), this protein is Glucose 1-dehydrogenase 2 (gdhII).